Consider the following 114-residue polypeptide: Probable prefoldin subunit 2 (114 aa).

The protein belongs to the prefoldin subunit beta family. Heterohexamer of two PFD-alpha type and four PFD-beta type subunits.

Functionally, binds specifically to cytosolic chaperonin (c-CPN) and transfers target proteins to it. Binds to nascent polypeptide chain and promotes folding in an environment in which there are many competing pathways for nonnative proteins. In Schizosaccharomyces pombe (strain 972 / ATCC 24843) (Fission yeast), this protein is Probable prefoldin subunit 2.